Here is a 391-residue protein sequence, read N- to C-terminus: MSRFHFFILVLLVSISGFSQGMLLPVISIIFETNGESAAINGLHATGLYIGVLLASPFMEAPLRKLGFKPLIVMGGSIVILSLFGFIWLQSVWVWFLLRLFIGIGDHMLHFSTQTWVTSMSSKQNRGRNLSIYGLSFGLGFAAGPFMVPLVKLSPSLPFIVSGCISLFAWLFVFFLQNAYPETSPHETKSDNSFRRFYQAMLFGWVAFMPTFGYGFLETALNGSFPVYALRLGISVDAVAIILPAFAIGSIIFQFPLGILSDKYGRRNVLLVILLTGALCFFIAGVFPSPYVIGGCFFIAGMAVGSTFTLGISYMTDLLPPHLLPAGNLLCGITFSLGSILGPVAGGWYMQTFESANLFYFITLTLSSVWLALVLGKPKSWSPAETYSSSS.

A run of 12 helical transmembrane segments spans residues 7 to 27 (FILV…LPVI), 39 to 59 (AING…SPFM), 66 to 88 (LGFK…GFIW), 92 to 111 (VWVW…MLHF), 131 to 151 (SIYG…VPLV), 156 to 176 (SLPF…VFFL), 197 to 217 (FYQA…YGFL), 239 to 259 (VAII…PLGI), 269 to 289 (VLLV…VFPS), 292 to 312 (VIGG…TLGI), 329 to 349 (LLCG…GGWY), and 356 to 376 (ANLF…LVLG).

The protein belongs to the major facilitator superfamily.

The protein resides in the cell membrane. This is an uncharacterized protein from Bacillus subtilis (strain 168).